Reading from the N-terminus, the 61-residue chain is DNA-directed RNA polymerase subunit Rpo6 (61 aa).

This sequence belongs to the archaeal Rpo6/eukaryotic RPB6 RNA polymerase subunit family. As to quaternary structure, part of the RNA polymerase complex.

It is found in the cytoplasm. It carries out the reaction RNA(n) + a ribonucleoside 5'-triphosphate = RNA(n+1) + diphosphate. DNA-dependent RNA polymerase (RNAP) catalyzes the transcription of DNA into RNA using the four ribonucleoside triphosphates as substrates. This is DNA-directed RNA polymerase subunit Rpo6 from Methanothermobacter thermautotrophicus (strain ATCC 29096 / DSM 1053 / JCM 10044 / NBRC 100330 / Delta H) (Methanobacterium thermoautotrophicum).